The primary structure comprises 488 residues: Teichuronic acid biosynthesis protein TuaE (488 aa).

14 helical membrane passes run 7 to 29 (AVHT…GAIH), 35 to 57 (MQMA…ATAF), 64 to 86 (FMAV…AIHL), 91 to 110 (LFLY…FGMV), 122 to 144 (LQVK…SLLW), 154 to 173 (YLAL…MYVQ), 180 to 202 (IVYA…NHIT), 222 to 244 (PTSV…FFYI), 257 to 274 (AIGL…FATG), 279 to 298 (LLGI…PPVL), 303 to 322 (IWLS…SKIY), 354 to 376 (NAWH…SYYL), 397 to 419 (ILAN…LIWV), and 459 to 476 (LFFH…VNVL).

It is found in the cell membrane. Its pathway is cell wall biogenesis; teichuronic acid biosynthesis. In terms of biological role, might be involved in the polymerization of teichuronic acid repeating units after their translocation to the outer surface of the membrane. This Bacillus subtilis (strain 168) protein is Teichuronic acid biosynthesis protein TuaE (tuaE).